We begin with the raw amino-acid sequence, 437 residues long: Probable D-serine dehydratase (437 aa).

Lys-106 carries the post-translational modification N6-(pyridoxal phosphate)lysine.

It belongs to the serine/threonine dehydratase family. DsdA subfamily. It depends on pyridoxal 5'-phosphate as a cofactor.

The catalysed reaction is D-serine = pyruvate + NH4(+). The sequence is that of Probable D-serine dehydratase from Hahella chejuensis (strain KCTC 2396).